Consider the following 115-residue polypeptide: Large ribosomal subunit protein uL18 (115 aa).

The protein belongs to the universal ribosomal protein uL18 family. In terms of assembly, part of the 50S ribosomal subunit; part of the 5S rRNA/L5/L18/L25 subcomplex. Contacts the 5S and 23S rRNAs.

Functionally, this is one of the proteins that bind and probably mediate the attachment of the 5S RNA into the large ribosomal subunit, where it forms part of the central protuberance. The chain is Large ribosomal subunit protein uL18 from Baumannia cicadellinicola subsp. Homalodisca coagulata.